The following is an 87-amino-acid chain: Small ribosomal subunit protein uS17 (87 aa).

It belongs to the universal ribosomal protein uS17 family. As to quaternary structure, part of the 30S ribosomal subunit.

Functionally, one of the primary rRNA binding proteins, it binds specifically to the 5'-end of 16S ribosomal RNA. This is Small ribosomal subunit protein uS17 from Geobacillus sp. (strain WCH70).